Reading from the N-terminus, the 192-residue chain is Shikimate kinase (192 aa).

15–20 (GAGKTT) is a binding site for ATP. T19 provides a ligand contact to Mg(2+). Substrate contacts are provided by D37, R61, and G83. Residue R121 coordinates ATP. R140 lines the substrate pocket.

The protein belongs to the shikimate kinase family. As to quaternary structure, monomer. Mg(2+) is required as a cofactor.

It localises to the cytoplasm. It carries out the reaction shikimate + ATP = 3-phosphoshikimate + ADP + H(+). Its pathway is metabolic intermediate biosynthesis; chorismate biosynthesis; chorismate from D-erythrose 4-phosphate and phosphoenolpyruvate: step 5/7. Functionally, catalyzes the specific phosphorylation of the 3-hydroxyl group of shikimic acid using ATP as a cosubstrate. This chain is Shikimate kinase, found in Cupriavidus pinatubonensis (strain JMP 134 / LMG 1197) (Cupriavidus necator (strain JMP 134)).